The following is a 427-amino-acid chain: Phosphatidylinositol 4-phosphate 5-kinase 10 (427 aa).

The 419-residue stretch at 1–419 (MFTREITAKD…RFQDFVSQIF (419 aa)) folds into the PIPK domain. 2 disordered regions span residues 247 to 287 (SRGS…DSEN) and 334 to 355 (MKIP…VGKQ). The segment at 379–400 (YGVRKRLEHCYKSIQHSSKTIS) is activation loop.

It carries out the reaction a 1,2-diacyl-sn-glycero-3-phospho-(1D-myo-inositol 4-phosphate) + ATP = a 1,2-diacyl-sn-glycero-3-phospho-(1D-myo-inositol-4,5-bisphosphate) + ADP + H(+). The polypeptide is Phosphatidylinositol 4-phosphate 5-kinase 10 (PIP5K10) (Arabidopsis thaliana (Mouse-ear cress)).